The chain runs to 301 residues: MSKHLTHLKQLEAESIQIMREVAAEFDNPVMLYSVGKDSSVLLHLARKAFYPGKIPFPLMHVDTNWKFKEMIEFRDQMAEKHGFDLIVHKNPRGIEMGISPFTHGSAKHTDIMKTEGLKQALDMHGFDAAFGGARRDEEKSRAKERVYSFRDSKHRWDPKNQRPELWNIYNGKVDKGESIRVFPLSNWTELDIWQYIYLEGIEIPSLYLAAERPVVERDGTLIMVDDERMPIESGEDVQTKMVRFRTLGCYPLTGAVESEAQTLPEIIQEMLLCTTSERQGRVIDNDSAGSMEKKKMEGYF.

This sequence belongs to the PAPS reductase family. CysD subfamily. As to quaternary structure, heterodimer composed of CysD, the smaller subunit, and CysN.

It carries out the reaction sulfate + ATP + H(+) = adenosine 5'-phosphosulfate + diphosphate. It participates in sulfur metabolism; hydrogen sulfide biosynthesis; sulfite from sulfate: step 1/3. Its function is as follows. With CysN forms the ATP sulfurylase (ATPS) that catalyzes the adenylation of sulfate producing adenosine 5'-phosphosulfate (APS) and diphosphate, the first enzymatic step in sulfur assimilation pathway. APS synthesis involves the formation of a high-energy phosphoric-sulfuric acid anhydride bond driven by GTP hydrolysis by CysN coupled to ATP hydrolysis by CysD. This chain is Sulfate adenylyltransferase subunit 2 1, found in Shewanella sediminis (strain HAW-EB3).